A 181-amino-acid polypeptide reads, in one-letter code: ATP synthase subunit b (181 aa).

A helical transmembrane segment spans residues 12–32; it reads LPAVYDIVWSAVVFVVLLVVI.

It belongs to the ATPase B chain family. In terms of assembly, F-type ATPases have 2 components, F(1) - the catalytic core - and F(0) - the membrane proton channel. F(1) has five subunits: alpha(3), beta(3), gamma(1), delta(1), epsilon(1). F(0) has three main subunits: a(1), b(2) and c(10-14). The alpha and beta chains form an alternating ring which encloses part of the gamma chain. F(1) is attached to F(0) by a central stalk formed by the gamma and epsilon chains, while a peripheral stalk is formed by the delta and b chains.

The protein resides in the cell membrane. Functionally, f(1)F(0) ATP synthase produces ATP from ADP in the presence of a proton or sodium gradient. F-type ATPases consist of two structural domains, F(1) containing the extramembraneous catalytic core and F(0) containing the membrane proton channel, linked together by a central stalk and a peripheral stalk. During catalysis, ATP synthesis in the catalytic domain of F(1) is coupled via a rotary mechanism of the central stalk subunits to proton translocation. In terms of biological role, component of the F(0) channel, it forms part of the peripheral stalk, linking F(1) to F(0). The chain is ATP synthase subunit b from Clavibacter sepedonicus (Clavibacter michiganensis subsp. sepedonicus).